Reading from the N-terminus, the 130-residue chain is Small ribosomal subunit protein uS9 (130 aa).

This sequence belongs to the universal ribosomal protein uS9 family.

This is Small ribosomal subunit protein uS9 from Pectobacterium atrosepticum (strain SCRI 1043 / ATCC BAA-672) (Erwinia carotovora subsp. atroseptica).